A 224-amino-acid chain; its full sequence is MRELEQALRGGLADLALVLEDRQIALLLDYLALIQKWTQVYNLTAVREPAEMLTHHLLDSLAVIQPLRRQLAGLRDQTPDTDTANVRLLDVGSGAGLPGVVIAICCPEITVDCVDTVAKKVAFIRQVAATLKLANLHGLHARVESLTGPYRVICSRAFASLADFTRLSSAALAPQGLWLAMKAKDPAEEVAALPATVKVFHVEHLVVPGLGADRCIVWMRQSAV.

Residues Gly92, Leu97, 143–144 (VE), and Arg156 contribute to the S-adenosyl-L-methionine site.

It belongs to the methyltransferase superfamily. RNA methyltransferase RsmG family.

It is found in the cytoplasm. The enzyme catalyses guanosine(527) in 16S rRNA + S-adenosyl-L-methionine = N(7)-methylguanosine(527) in 16S rRNA + S-adenosyl-L-homocysteine. Its function is as follows. Specifically methylates the N7 position of guanine in position 527 of 16S rRNA. This is Ribosomal RNA small subunit methyltransferase G from Albidiferax ferrireducens (strain ATCC BAA-621 / DSM 15236 / T118) (Rhodoferax ferrireducens).